The chain runs to 1009 residues: Rho GTPase-activating protein gacT (1009 aa).

Disordered regions lie at residues 1–72 (MKNI…SRNH) and 89–117 (TSHHSHSHNHNHNHNHQLTQPIQQQQQTQ). Basic and acidic residues predominate over residues 12-23 (FHKDKKEGDKQD). Over residues 26 to 35 (GSSGSSGNSG) the composition is skewed to low complexity. Residues 58–69 (ESYSGDNSPTLS) show a composition bias toward polar residues. Residues 89–103 (TSHHSHSHNHNHNHN) are compositionally biased toward basic residues. Over residues 104 to 117 (HQLTQPIQQQQQTQ) the composition is skewed to low complexity. A Rho-GAP domain is found at 163–351 (VPLTQVPCRA…EVFPQHHLYY (189 aa)). 3 disordered regions span residues 388 to 420 (TISGLLPSNGQNNSPSSSTITSTTITSPHDSTA), 432 to 482 (PEQQ…TFRV), and 508 to 571 (GPSG…TTDQ). Composition is skewed to low complexity over residues 394-415 (PSNGQNNSPSSSTITSTTITSP), 432-468 (PEQQQQMLQQQQQQQQQQEKQSSSSLSQSQQSIQPIS), and 512-521 (TTGTTPNGGS). A compositionally biased stretch (gly residues) spans 522 to 546 (LSIGGGNGGNGGSSLSVGSGGGNGG). Positions 547-557 (SSLSVGSNTSV) are enriched in low complexity. Residues 580–656 (AYTNNEDTKA…IEREIEKKRL (77 aa)) adopt a coiled-coil conformation. Residues 686–713 (ISTIDGSGGSNRNSKNYGNGSSSSSNRR) form a disordered region. Positions 695 to 713 (SNRNSKNYGNGSSSSSNRR) are enriched in low complexity. Positions 715 to 743 (SNTINQQLQMQLQQLQIQQQQYQQTQQSQ) form a coiled coil. Residues 759-781 (TTTTTTTSSGSNRFSSNRYKPVD) form a disordered region. The segment covering 766–781 (SSGSNRFSSNRYKPVD) has biased composition (polar residues). The stretch at 839–952 (ENLVLLQQQY…IEEIHLLETY (114 aa)) forms a coiled coil. The tract at residues 965 to 1009 (STTKDLLTRSRSPTLPSSINMSTSSLGSSSSSAYNNNNNNNNVPK) is disordered. Polar residues predominate over residues 967–980 (TKDLLTRSRSPTLP). The segment covering 981–1009 (SSINMSTSSLGSSSSSAYNNNNNNNNVPK) has biased composition (low complexity).

It is found in the cytoplasm. Its function is as follows. Rho GTPase-activating protein involved in the signal transduction pathway. In Dictyostelium discoideum (Social amoeba), this protein is Rho GTPase-activating protein gacT (gacT).